A 197-amino-acid polypeptide reads, in one-letter code: Imidazoleglycerol-phosphate dehydratase (197 aa).

This sequence belongs to the imidazoleglycerol-phosphate dehydratase family.

It localises to the cytoplasm. The catalysed reaction is D-erythro-1-(imidazol-4-yl)glycerol 3-phosphate = 3-(imidazol-4-yl)-2-oxopropyl phosphate + H2O. It participates in amino-acid biosynthesis; L-histidine biosynthesis; L-histidine from 5-phospho-alpha-D-ribose 1-diphosphate: step 6/9. The chain is Imidazoleglycerol-phosphate dehydratase from Methanocaldococcus jannaschii (strain ATCC 43067 / DSM 2661 / JAL-1 / JCM 10045 / NBRC 100440) (Methanococcus jannaschii).